The chain runs to 362 residues: Flagellar P-ring protein (362 aa).

Residues 1–18 form the signal peptide; the sequence is MKHIALIVLYFLSFSVQA.

The protein belongs to the FlgI family. In terms of assembly, the basal body constitutes a major portion of the flagellar organelle and consists of four rings (L,P,S, and M) mounted on a central rod.

Its subcellular location is the periplasm. The protein resides in the bacterial flagellum basal body. Assembles around the rod to form the L-ring and probably protects the motor/basal body from shearing forces during rotation. This Marinomonas sp. (strain MWYL1) protein is Flagellar P-ring protein.